Here is a 480-residue protein sequence, read N- to C-terminus: Glutamate--tRNA ligase (480 aa).

Positions 21-31 (PSPTGYLHVGG) match the 'HIGH' region motif. Positions 110, 112, 137, and 139 each coordinate Zn(2+). A 'KMSKS' region motif is present at residues 248 to 252 (KLSKR). Lysine 251 serves as a coordination point for ATP.

This sequence belongs to the class-I aminoacyl-tRNA synthetase family. Glutamate--tRNA ligase type 1 subfamily. Monomer. Zn(2+) is required as a cofactor.

The protein resides in the cytoplasm. The catalysed reaction is tRNA(Glu) + L-glutamate + ATP = L-glutamyl-tRNA(Glu) + AMP + diphosphate. Functionally, catalyzes the attachment of glutamate to tRNA(Glu) in a two-step reaction: glutamate is first activated by ATP to form Glu-AMP and then transferred to the acceptor end of tRNA(Glu). The protein is Glutamate--tRNA ligase of Haemophilus influenzae (strain 86-028NP).